Here is a 284-residue protein sequence, read N- to C-terminus: S-formylglutathione hydrolase (284 aa).

At A2 the chain carries N-acetylalanine. Substrate is bound by residues N63 and K67. Residues S152, D229, and H262 each act as charge relay system in the active site.

It belongs to the esterase D family. As to quaternary structure, homodimer.

The enzyme catalyses S-formylglutathione + H2O = formate + glutathione + H(+). With respect to regulation, activity toward p-nitrophenyl acetate inhibited by N-ethylmaleimide, 10-(fluoroethoxyphosphinyl)-N-(biotinamidopentyl)decanamide (FP-biotin), iodoacetamide, CuCl(2) and ZnSO(4), but not by phenylmethylsulfonyl fluoride, EDTA, Mg(2+), Mn(2+), Ca(2+) or paraoxon, an organo-phosphate inhibitor of serine hydrolases. In terms of biological role, serine hydrolase which catalyzes the hydrolysis of S-formylglutathione to glutathione and formic acid. Also hydrolyzes S-acetylglutathione and a range of carboxyesters in vitro. Involved in the detoxification of formaldehyde. The chain is S-formylglutathione hydrolase (SFGH) from Arabidopsis thaliana (Mouse-ear cress).